Reading from the N-terminus, the 428-residue chain is UPF0229 protein YeaH (428 aa).

The span at 78 to 90 (GNDHFIQNDRIER) shows a compositional bias: basic and acidic residues. The tract at residues 78–111 (GNDHFIQNDRIERPQGGGGGGSGSGQGQASQDGE) is disordered. Positions 92–103 (QGGGGGGSGSGQ) are enriched in gly residues.

Belongs to the UPF0229 family.

The sequence is that of UPF0229 protein YeaH from Salmonella heidelberg (strain SL476).